A 124-amino-acid polypeptide reads, in one-letter code: Small ribosomal subunit protein bS16 (124 aa).

A disordered region spans residues 88–124; that stretch reads VPEQTKQAQPKAKAQERLREAEEKARAAAEAAASAEG. Residues 100 to 114 show a composition bias toward basic and acidic residues; it reads KAQERLREAEEKARA. A compositionally biased stretch (low complexity) spans 115-124; that stretch reads AAEAAASAEG.

It belongs to the bacterial ribosomal protein bS16 family.

This Rhodospirillum rubrum (strain ATCC 11170 / ATH 1.1.1 / DSM 467 / LMG 4362 / NCIMB 8255 / S1) protein is Small ribosomal subunit protein bS16.